A 223-amino-acid polypeptide reads, in one-letter code: Ribonuclease T (223 aa).

Positions 20 to 194 (VVIDVETAGF…YDTEQTALLF (175 aa)) constitute an Exonuclease domain. Residues Asp-23, Glu-25, His-181, and Asp-186 each contribute to the Mg(2+) site. His-181 functions as the Proton donor/acceptor in the catalytic mechanism.

This sequence belongs to the RNase T family. As to quaternary structure, homodimer. The cofactor is Mg(2+).

In terms of biological role, trims short 3' overhangs of a variety of RNA species, leaving a one or two nucleotide 3' overhang. Responsible for the end-turnover of tRNA: specifically removes the terminal AMP residue from uncharged tRNA (tRNA-C-C-A). Also appears to be involved in tRNA biosynthesis. The protein is Ribonuclease T of Cronobacter sakazakii (strain ATCC BAA-894) (Enterobacter sakazakii).